The primary structure comprises 343 residues: Probable transposase for insertion sequence element (343 aa).

The protein belongs to the transposase mutator family.

In terms of biological role, required for the transposition of the insertion element. The chain is Probable transposase for insertion sequence element from Corynebacterium diphtheriae.